The following is a 513-amino-acid chain: ATP synthase subunit beta (513 aa).

The interval 1-29 (MATAPATEKKAPAKKAAAPKAAAPKKAAA) is disordered. A compositionally biased stretch (low complexity) spans 14–29 (KKAAAPKAAAPKKAAA). Residue 186 to 193 (GGAGVGKT) coordinates ATP.

This sequence belongs to the ATPase alpha/beta chains family. In terms of assembly, F-type ATPases have 2 components, CF(1) - the catalytic core - and CF(0) - the membrane proton channel. CF(1) has five subunits: alpha(3), beta(3), gamma(1), delta(1), epsilon(1). CF(0) has three main subunits: a(1), b(2) and c(9-12). The alpha and beta chains form an alternating ring which encloses part of the gamma chain. CF(1) is attached to CF(0) by a central stalk formed by the gamma and epsilon chains, while a peripheral stalk is formed by the delta and b chains.

Its subcellular location is the cell inner membrane. The catalysed reaction is ATP + H2O + 4 H(+)(in) = ADP + phosphate + 5 H(+)(out). Functionally, produces ATP from ADP in the presence of a proton gradient across the membrane. The catalytic sites are hosted primarily by the beta subunits. The protein is ATP synthase subunit beta of Sphingopyxis alaskensis (strain DSM 13593 / LMG 18877 / RB2256) (Sphingomonas alaskensis).